A 399-amino-acid chain; its full sequence is Large envelope protein (399 aa).

Methionine 1 bears the N-acetylmethionine mark. The N-myristoyl glycine; by host moiety is linked to residue glycine 2. Residues 2-118 are pre-S1; that stretch reads GLSWTVPLEW…PPLRDTHPQA (117 aa). Residues 2–173 are pre-S; the sequence is GLSWTVPLEW…FSRIGDPAPN (172 aa). Topologically, residues 2-180 are virion surface; in external conformation; sequence GLSWTVPLEW…APNMESITSG (179 aa). The Intravirion; in internal conformation portion of the chain corresponds to 2-252; it reads GLSWTVPLEW…PGYRWMCLRR (251 aa). The N-linked (GlcNAc...) asparagine glycan is linked to serine 4. The tract at residues 85–110 is disordered; it reads KTLPADPPPASTNRQSGRQPTPITPP. Residues 95–105 show a composition bias toward polar residues; the sequence is STNRQSGRQPT. Residues 119–173 form a pre-S2 region; it reads MQWNSTTFHQALQDPRVRGLYFPAGGSSSGTVNPVPTTASLISSIFSRIGDPAPN. Residues 181–201 form a helical membrane-spanning segment; that stretch reads FLGPLLVLQAGFFLLTKILTI. Residues 202-252 lie on the Intravirion; in external conformation side of the membrane; the sequence is PQSLDSWWTSLNFLGGAPVCLGQNSQSPTSNHSPTSCPPICPGYRWMCLRR. Residues 253 to 273 traverse the membrane as a helical segment; it reads FIIFLFILLLCLIFLLVLLDY. The Virion surface segment spans residues 274-347; it reads QGMLPVCPLI…WASARFSWLS (74 aa). The N-linked (GlcNAc...) asparagine; by host glycan is linked to asparagine 319. The helical transmembrane segment at 348 to 368 threads the bilayer; it reads LLVPFVQWFAGLSPTVWLSVI. At 369–374 the chain is on the intravirion side; the sequence is WMMWYW. A helical transmembrane segment spans residues 375-397; it reads GPSLYDILSPFIPLLPIFFCLWV. Residues 398–399 lie on the Virion surface side of the membrane; that stretch reads YI.

It belongs to the orthohepadnavirus major surface antigen family. In terms of assembly, in its internal form (Li-HBsAg), interacts with the capsid protein and with the isoform S. Interacts with host chaperone CANX. As to quaternary structure, associates with host chaperone CANX through its pre-S2 N glycan; this association may be essential for isoform M proper secretion. Interacts with isoform L. Interacts with the antigens of satellite virus HDV (HDVAgs); this interaction is required for encapsidation of HDV genomic RNA. In terms of processing, isoform M is N-terminally acetylated by host at a ratio of 90%, and N-glycosylated by host at the pre-S2 region. Post-translationally, myristoylated.

It is found in the virion membrane. In terms of biological role, the large envelope protein exists in two topological conformations, one which is termed 'external' or Le-HBsAg and the other 'internal' or Li-HBsAg. In its external conformation the protein attaches the virus to cell receptors and thereby initiating infection. This interaction determines the species specificity and liver tropism. This attachment induces virion internalization predominantly through caveolin-mediated endocytosis. The large envelope protein also assures fusion between virion membrane and endosomal membrane. In its internal conformation the protein plays a role in virion morphogenesis and mediates the contact with the nucleocapsid like a matrix protein. Its function is as follows. The middle envelope protein plays an important role in the budding of the virion. It is involved in the induction of budding in a nucleocapsid independent way. In this process the majority of envelope proteins bud to form subviral lipoprotein particles of 22 nm of diameter that do not contain a nucleocapsid. The polypeptide is Large envelope protein (Homo sapiens (Human)).